The following is a 966-amino-acid chain: Mitogen-activated protein kinase kinase kinase 13 (966 aa).

The disordered stretch occupies residues 1 to 59 (MANPQEHLSCSSSPRLPLSENKTFNGLQDDLAPMGSHASPKLLKDQQEKGMVQTELAEG). A compositionally biased stretch (low complexity) spans 8 to 19 (LSCSSSPRLPLS). One can recognise a Protein kinase domain in the interval 168-409 (ISELQWLGSG…FRQTLMHLDI (242 aa)). Residues 174–182 (LGSGAQGAV) and K195 each bind ATP. D279 (proton acceptor) is an active-site residue. Leucine-zipper stretches follow at residues 433–454 (VKKH…DEEL) and 486–507 (LSAI…EQAV). The stretch at 457 to 496 (RRREELRHALDIREHYERKLERANNLYMELSAIMLQLEMR) forms a coiled coil. Disordered stretches follow at residues 561–663 (EVAP…GQDI), 743–874 (LDVP…DELA), and 937–966 (QFEE…SATW). Over residues 567-581 (SPLSGSPKLSSSSSK) the composition is skewed to low complexity. The span at 582 to 594 (SRYRSKPRHRRGN) shows a compositional bias: basic residues. Over residues 609 to 622 (QPAQEDSPHPTSLH) the composition is skewed to polar residues. Positions 629–642 (PSSQHHNLLQQQYQ) are enriched in low complexity. Positions 814–827 (DSSEEEEGEVDSEV) are enriched in acidic residues. The segment at 815 to 828 (SSEEEEGEVDSEVE) is acidic. Residues 840 to 855 (SSCQSYSTFSSENFSV) show a composition bias toward polar residues. Over residues 939 to 950 (EESDCDSSDGEC) the composition is skewed to acidic residues. A compositionally biased stretch (polar residues) spans 954–966 (TVRTNKHYSSATW).

This sequence belongs to the protein kinase superfamily. Ser/Thr protein kinase family. As to quaternary structure, homodimer; forms dimers through the leucine-zipper motif. Interacts with the C-terminus of MAPK8IP1 through the kinase catalytic domain. Binds PRDX3. Associates with the IKK complex through the kinase domain. Requires Mg(2+) as cofactor. Post-translationally, autophosphorylated on serine and threonine residues.

It localises to the cytoplasm. The protein localises to the membrane. It carries out the reaction L-seryl-[protein] + ATP = O-phospho-L-seryl-[protein] + ADP + H(+). The catalysed reaction is L-threonyl-[protein] + ATP = O-phospho-L-threonyl-[protein] + ADP + H(+). Its activity is regulated as follows. Activated by autophosphorylation and homodimerization. Its function is as follows. Activates the JUN N-terminal pathway through activation of the MAP kinase kinase MAP2K7. Acts synergistically with PRDX3 to regulate the activation of NF-kappa-B in the cytosol. This activation is kinase-dependent and involves activating the IKK complex, the IKBKB-containing complex that phosphorylates inhibitors of NF-kappa-B. The polypeptide is Mitogen-activated protein kinase kinase kinase 13 (MAP3K13) (Bos taurus (Bovine)).